The chain runs to 127 residues: Fluoride-specific ion channel FluC (127 aa).

Transmembrane regions (helical) follow at residues 4-24, 39-59, 68-88, and 102-122; these read LDYL…YLVS, GTII…FAAI, AILF…TFTY, and VAYA…GMIL. 2 residues coordinate Na(+): Gly-78 and Thr-81.

The protein belongs to the fluoride channel Fluc/FEX (TC 1.A.43) family.

The protein localises to the cell inner membrane. It catalyses the reaction fluoride(in) = fluoride(out). With respect to regulation, na(+) is not transported, but it plays an essential structural role and its presence is essential for fluoride channel function. Functionally, fluoride-specific ion channel. Important for reducing fluoride concentration in the cell, thus reducing its toxicity. This Thermotoga petrophila (strain ATCC BAA-488 / DSM 13995 / JCM 10881 / RKU-1) protein is Fluoride-specific ion channel FluC.